The following is a 190-amino-acid chain: Lipid A acyltransferase PagP (190 aa).

The N-terminal stretch at Met1–Ala29 is a signal peptide. Catalysis depends on residues His62, Asp105, and Ser106.

It belongs to the lipid A palmitoyltransferase family. Homodimer.

It is found in the cell outer membrane. The catalysed reaction is a lipid A + a 1,2-diacyl-sn-glycero-3-phosphocholine = a hepta-acyl lipid A + a 2-acyl-sn-glycero-3-phosphocholine. The enzyme catalyses a lipid IVA + a 1,2-diacyl-sn-glycero-3-phosphocholine = a lipid IVB + a 2-acyl-sn-glycero-3-phosphocholine. It carries out the reaction a lipid IIA + a 1,2-diacyl-sn-glycero-3-phosphocholine = a lipid IIB + a 2-acyl-sn-glycero-3-phosphocholine. Transfers a fatty acid residue from the sn-1 position of a phospholipid to the N-linked hydroxyfatty acid chain on the proximal unit of lipid A or its precursors. Required for resistance to cationic antimicrobial peptides (CAMPs). Modifications of lipid A with an acyl chain allow to evade host immune defenses by resisting antimicrobial peptides and attenuating the inflammatory response to infection triggered by lipopolysaccharide through the Toll-like receptor 4 (TLR4) signal transduction pathway. The polypeptide is Lipid A acyltransferase PagP (Salmonella typhimurium (strain LT2 / SGSC1412 / ATCC 700720)).